Consider the following 67-residue polypeptide: uncharacterized protein (67 aa).

The helical transmembrane segment at isoleucine 19–tryptophan 39 threads the bilayer.

It localises to the membrane. This is an uncharacterized protein from Dictyostelium discoideum (Social amoeba).